A 197-amino-acid chain; its full sequence is uncharacterized protein (197 aa).

Residues 1–19 (MKLASLLVGSLMLAVPALA) form the signal peptide.

It localises to the secreted. This is an uncharacterized protein from Arthroderma benhamiae (strain ATCC MYA-4681 / CBS 112371) (Trichophyton mentagrophytes).